Reading from the N-terminus, the 353-residue chain is Uroporphyrinogen decarboxylase (353 aa).

Residues 33-37 (RQAGR), Asp82, Tyr158, Ser213, and His332 each bind substrate.

This sequence belongs to the uroporphyrinogen decarboxylase family. As to quaternary structure, homodimer.

It is found in the cytoplasm. It carries out the reaction uroporphyrinogen III + 4 H(+) = coproporphyrinogen III + 4 CO2. It participates in porphyrin-containing compound metabolism; protoporphyrin-IX biosynthesis; coproporphyrinogen-III from 5-aminolevulinate: step 4/4. Its function is as follows. Catalyzes the decarboxylation of four acetate groups of uroporphyrinogen-III to yield coproporphyrinogen-III. The polypeptide is Uroporphyrinogen decarboxylase (Gluconobacter oxydans (strain 621H) (Gluconobacter suboxydans)).